Consider the following 134-residue polypeptide: Large ribosomal subunit protein bL19 (134 aa).

Residues 108–134 (KSARIVERSDRSDKAKAQKAAAATAAE) are disordered. The span at 111–123 (RIVERSDRSDKAK) shows a compositional bias: basic and acidic residues. Residues 125–134 (QKAAAATAAE) are compositionally biased toward low complexity.

This sequence belongs to the bacterial ribosomal protein bL19 family.

In terms of biological role, this protein is located at the 30S-50S ribosomal subunit interface and may play a role in the structure and function of the aminoacyl-tRNA binding site. This Methylorubrum extorquens (strain PA1) (Methylobacterium extorquens) protein is Large ribosomal subunit protein bL19.